The sequence spans 248 residues: Mannose-binding protein C (248 aa).

Residues 1–20 (MSLIPSLSLLLMSMVAASYS) form the signal peptide. The region spanning 42–99 (GINGFPGKDGRDGTKGEKGEPGQGLRGLQGPPGKLGPPGNPGPSGSPGPKGQKGDPGK) is the Collagen-like domain. Residues 43–107 (INGFPGKDGR…GKSPDCDSSL (65 aa)) form a disordered region. At proline 47 the chain carries 4-hydroxyproline. Positions 49–61 (KDGRDGTKGEKGE) are enriched in basic and acidic residues. 4-hydroxyproline occurs at positions 73, 79, 82, and 88. The span at 75 to 87 (KLGPPGNPGPSGS) shows a compositional bias: pro residues. Over residues 93–102 (QKGDPGKSPD) the composition is skewed to basic and acidic residues. Residues 112 to 130 (RKALQTEMARIKKWLTFSL) are a coiled coil. The C-type lectin domain occupies 134–245 (VGNKFFLTNG…CSSSHLAVCE (112 aa)). 2 disulfides stabilise this stretch: cysteine 155/cysteine 244 and cysteine 222/cysteine 236.

As to quaternary structure, oligomeric complex of 3 or more homotrimers. Interacts with MASP1 and MASP2. Interacts with MEP1A and MEP1B and may inhibit their catalytic activity. Post-translationally, hydroxylation on proline residues within the sequence motif, GXPG, is most likely to be 4-hydroxy as this fits the requirement for 4-hydroxylation in vertebrates.

It is found in the secreted. In terms of biological role, calcium-dependent lectin involved in innate immune defense. Binds mannose, fucose and N-acetylglucosamine on different microorganisms and activates the lectin complement pathway. Binds to late apoptotic cells, as well as to apoptotic blebs and to necrotic cells, but not to early apoptotic cells, facilitating their uptake by macrophages. The sequence is that of Mannose-binding protein C (MBL2) from Hylobates lar (Lar gibbon).